The following is a 274-amino-acid chain: Dermonecrotic toxin SdSicTox-betaIIB1biv (274 aa).

His5 is an active-site residue. 2 residues coordinate Mg(2+): Glu25 and Asp27. His41 serves as the catalytic Nucleophile. Cystine bridges form between Cys45–Cys51 and Cys47–Cys190. Asp85 contacts Mg(2+).

It belongs to the arthropod phospholipase D family. Class II subfamily. Requires Mg(2+) as cofactor. As to expression, expressed by the venom gland.

It localises to the secreted. It catalyses the reaction an N-(acyl)-sphingosylphosphocholine = an N-(acyl)-sphingosyl-1,3-cyclic phosphate + choline. The enzyme catalyses an N-(acyl)-sphingosylphosphoethanolamine = an N-(acyl)-sphingosyl-1,3-cyclic phosphate + ethanolamine. The catalysed reaction is a 1-acyl-sn-glycero-3-phosphocholine = a 1-acyl-sn-glycero-2,3-cyclic phosphate + choline. It carries out the reaction a 1-acyl-sn-glycero-3-phosphoethanolamine = a 1-acyl-sn-glycero-2,3-cyclic phosphate + ethanolamine. Its function is as follows. Dermonecrotic toxins cleave the phosphodiester linkage between the phosphate and headgroup of certain phospholipids (sphingolipid and lysolipid substrates), forming an alcohol (often choline) and a cyclic phosphate. This toxin acts on sphingomyelin (SM). It may also act on ceramide phosphoethanolamine (CPE), lysophosphatidylcholine (LPC) and lysophosphatidylethanolamine (LPE), but not on lysophosphatidylserine (LPS), and lysophosphatidylglycerol (LPG). It acts by transphosphatidylation, releasing exclusively cyclic phosphate products as second products. Induces dermonecrosis, hemolysis, increased vascular permeability, edema, inflammatory response, and platelet aggregation. This Sicarius cf. damarensis (strain GJB-2008) (Six-eyed sand spider) protein is Dermonecrotic toxin SdSicTox-betaIIB1biv.